The following is a 45-amino-acid chain: Large ribosomal subunit protein bL34 (45 aa).

The protein belongs to the bacterial ribosomal protein bL34 family.

In Streptomyces coelicolor (strain ATCC BAA-471 / A3(2) / M145), this protein is Large ribosomal subunit protein bL34 (rpmH).